Reading from the N-terminus, the 646-residue chain is MNIRSNPDTTRPAVTTGALPSSRKMFSAPDAAPDLRVPLREILLSEGAGEPNLPVYDTSGPYTDPNVIIDVNAGLPRTRLAWVKERGGVEEYDGREIKPEDNGNVGASHAAAAFKAHHKPLRGIGDAPITQLEFARAGIITKEMIYVAERENLGRKKQLERAEAALADGEAFGASVPAFITPEFVREEIARGRAIIPSNINHAELEPMIIGRNFLVKINANIGNSAVTSSVEEEVDKMVWAIRWGADTVMDLSTGRNIHTTREWILRNSPVPIGTVPIYQALEKCDGDPVKLTWELYRDTLVEQCEQGVDYFTIHAGVRLPYIHLTADRVTGIVSRGGSIMAKWCLAHHKESFLYTHFEEICDLMRKYDVSFSLGDGLRPGSIADANDRAQFAELETLGELTQIAWKKGCQVMIEGPGHVPMHKIKINMDKQLKECGEAPFYTLGPLTTDIAPGYDHITSGIGAAMIGWFGCAMLCYVTPKEHLGLPNRDDVKTGVITYKIAAHAADLAKGHPAAQLRDDALSRARFDFRWQDQFNLGLDPDTAVAFHDETLPKDAHKVAHFCSMCGPKFCSMKITQDVRDYAATLGDNEKAALYPDTAPKANDAAGVPEPSYRDQGMKEMSARFKEMGGNVYLDAEKVKESNRVL.

Polar residues predominate over residues 1–13 (MNIRSNPDTTRPA). The tract at residues 1–30 (MNIRSNPDTTRPAVTTGALPSSRKMFSAPD) is disordered. Substrate is bound by residues asparagine 221, methionine 250, tyrosine 279, histidine 315, 335-337 (SRG), 376-379 (DGLR), and glutamate 415. Histidine 419 is a Zn(2+) binding site. Tyrosine 442 contributes to the substrate binding site. Histidine 483 contributes to the Zn(2+) binding site. [4Fe-4S] cluster-binding residues include cysteine 563, cysteine 566, and cysteine 571.

It belongs to the ThiC family. As to quaternary structure, homodimer. The cofactor is [4Fe-4S] cluster.

It carries out the reaction 5-amino-1-(5-phospho-beta-D-ribosyl)imidazole + S-adenosyl-L-methionine = 4-amino-2-methyl-5-(phosphooxymethyl)pyrimidine + CO + 5'-deoxyadenosine + formate + L-methionine + 3 H(+). The protein operates within cofactor biosynthesis; thiamine diphosphate biosynthesis. Catalyzes the synthesis of the hydroxymethylpyrimidine phosphate (HMP-P) moiety of thiamine from aminoimidazole ribotide (AIR) in a radical S-adenosyl-L-methionine (SAM)-dependent reaction. This chain is Phosphomethylpyrimidine synthase, found in Nitrobacter winogradskyi (strain ATCC 25391 / DSM 10237 / CIP 104748 / NCIMB 11846 / Nb-255).